The primary structure comprises 26 residues: MPSQKSPTKRSPTKRSPQKGGKGAKR.

The disordered stretch occupies residues 1–26 (MPSQKSPTKRSPTKRSPQKGGKGAKR). 3 short sequence motifs (SPKK motif) span residues 6 to 9 (SPTK), 11 to 14 (SPTK), and 16 to 19 (SPQK). Over residues 7 to 26 (PTKRSPTKRSPQKGGKGAKR) the composition is skewed to basic residues. 2 positions are modified to phosphoserine: serine 11 and serine 16.

It belongs to the histone H2B family. As to quaternary structure, the nucleosome is a histone octamer containing two molecules each of H2A, H2B, H3 and H4 assembled in one H3-H4 heterotetramer and two H2A-H2B heterodimers. The octamer wraps approximately 147 bp of DNA. Monoubiquitination gives a specific tag for epigenetic transcriptional activation and is also prerequisite for histone H3 'Lys-4' and 'Lys-79' methylation. In terms of processing, phosphorylated on SPKK motifs 2 and 3; which may regulate DNA binding. Dephosphorylated during maturation of spermatids to mature sperm and rephosphorylated at fertilization.

It is found in the nucleus. The protein localises to the chromosome. Its function is as follows. Core component of nucleosome. Nucleosomes wrap and compact DNA into chromatin, limiting DNA accessibility to the cellular machineries which require DNA as a template. Histones thereby play a central role in transcription regulation, DNA repair, DNA replication and chromosomal stability. DNA accessibility is regulated via a complex set of post-translational modifications of histones, also called histone code, and nucleosome remodeling. The sequence is that of Histone H2B.1, sperm from Echinus esculentus (Sea urchin).